The sequence spans 315 residues: Ornithine carbamoyltransferase, anabolic (315 aa).

Carbamoyl phosphate is bound by residues 57 to 60 (STRT), glutamine 84, arginine 108, and 135 to 138 (HPCQ). L-ornithine contacts are provided by residues asparagine 166, aspartate 230, and 234 to 235 (SM). Carbamoyl phosphate is bound by residues 270–271 (CL) and arginine 298.

This sequence belongs to the aspartate/ornithine carbamoyltransferase superfamily. OTCase family. Homododecamer (tetramer of trimers).

It is found in the cytoplasm. It catalyses the reaction carbamoyl phosphate + L-ornithine = L-citrulline + phosphate + H(+). The protein operates within amino-acid biosynthesis; L-arginine biosynthesis; L-arginine from L-ornithine and carbamoyl phosphate: step 1/3. Inhibited by the bisubstrate delta-N-phosphonoacetyl-L-ornithine (PALO). Its function is as follows. Reversibly catalyzes the transfer of the carbamoyl group from carbamoyl phosphate (CP) to the N(epsilon) atom of ornithine (ORN) to produce L-citrulline, which is a substrate for argininosuccinate synthetase, the enzyme involved in the final step in arginine biosynthesis. In Pyrococcus furiosus (strain ATCC 43587 / DSM 3638 / JCM 8422 / Vc1), this protein is Ornithine carbamoyltransferase, anabolic.